Reading from the N-terminus, the 225-residue chain is Uridine kinase (225 aa).

ATP is bound at residue 12–19 (GGTGAGKT).

Belongs to the uridine kinase family.

The protein resides in the cytoplasm. The enzyme catalyses uridine + ATP = UMP + ADP + H(+). It carries out the reaction cytidine + ATP = CMP + ADP + H(+). The protein operates within pyrimidine metabolism; CTP biosynthesis via salvage pathway; CTP from cytidine: step 1/3. Its pathway is pyrimidine metabolism; UMP biosynthesis via salvage pathway; UMP from uridine: step 1/1. In Halobacterium salinarum (strain ATCC 700922 / JCM 11081 / NRC-1) (Halobacterium halobium), this protein is Uridine kinase.